The primary structure comprises 429 residues: Histidine--tRNA ligase (429 aa).

This sequence belongs to the class-II aminoacyl-tRNA synthetase family. In terms of assembly, homodimer.

It localises to the cytoplasm. The enzyme catalyses tRNA(His) + L-histidine + ATP = L-histidyl-tRNA(His) + AMP + diphosphate + H(+). The sequence is that of Histidine--tRNA ligase from Streptococcus pneumoniae serotype 2 (strain D39 / NCTC 7466).